The sequence spans 529 residues: Serine/threonine-protein kinase RIO2 (529 aa).

The Protein kinase domain maps to 97–273 (VGNQIGIGKE…RDVTCVRTFF (177 aa)). Residue K123 participates in ATP binding. D228 serves as the catalytic Proton acceptor. 2 disordered regions span residues 331–366 (RNRQ…KDHE) and 411–452 (EGYK…GHVA). Residues 337–346 (DLGEDEDDSD) are compositionally biased toward acidic residues. Basic and acidic residues predominate over residues 411–428 (EGYKDIELPPEDFKRPAD). The segment covering 429-447 (SENDDENDEDEEEGEEEDA) has biased composition (acidic residues).

The protein belongs to the protein kinase superfamily. RIO-type Ser/Thr kinase family. It depends on Mg(2+) as a cofactor. Expressed in pharynx (metacorpus and posterior bulbus). Expression is restricted to adult stage.

The catalysed reaction is L-seryl-[protein] + ATP = O-phospho-L-seryl-[protein] + ADP + H(+). It catalyses the reaction L-threonyl-[protein] + ATP = O-phospho-L-threonyl-[protein] + ADP + H(+). In terms of biological role, required for larval development. This Caenorhabditis elegans protein is Serine/threonine-protein kinase RIO2.